We begin with the raw amino-acid sequence, 453 residues long: Choline kinase alpha (453 aa).

The segment at 22-81 is disordered; that stretch reads CGGNAAPTPGVGQQRDAAGELESKQLGGRTQPLALPPPPPPPLPLPPPPSPPLADEQPEP. Over residues 55-73 the composition is skewed to pro residues; it reads ALPPPPPPPLPLPPPPSPP. Ser71 is modified (phosphoserine). ATP is bound by residues 113–119, Arg142, and 203–209; these read RGGLSNM and QFIPSRR. 115–117 contributes to the phosphocholine binding site; the sequence is GLS. N6-acetyllysine is present on Lys243. Ser275 bears the Phosphoserine mark. The ATP site is built by Gln304 and Asp326.

Belongs to the choline/ethanolamine kinase family. As to quaternary structure, homodimer. Heterodimer with CHKB. In terms of assembly, monomer; acetylation by KAT5 promotes dissociation of the homodimer and monomerization. Phosphorylated at Ser-275 by AMPK in response to glucose deprivation, leading to localization to lipid droplets. In terms of processing, acetylated by KAT5 at Lys-243 following phosphorylation by AMPK, leading to monomerization and conversion into a tyrosine-protein kinase. Expressed ubiquitously with the highest level in testis.

The protein resides in the cytoplasm. It is found in the cytosol. Its subcellular location is the lipid droplet. The enzyme catalyses choline + ATP = phosphocholine + ADP + H(+). The catalysed reaction is ethanolamine + ATP = phosphoethanolamine + ADP + H(+). It carries out the reaction L-tyrosyl-[protein] + ATP = O-phospho-L-tyrosyl-[protein] + ADP + H(+). It functions in the pathway phospholipid metabolism; phosphatidylcholine biosynthesis; phosphocholine from choline: step 1/1. The protein operates within phospholipid metabolism; phosphatidylethanolamine biosynthesis; phosphatidylethanolamine from ethanolamine: step 1/3. Plays a key role in phospholipid biosynthesis by catalyzing the phosphorylation of free choline to phosphocholine, the first step in phosphatidylcholine biosynthesis. Also phosphorylates ethanolamine, thereby contributing to phosphatidylethanolamine biosynthesis. Has higher activity with choline. Functionally, this isoform plays a key role in lipolysis of lipid droplets following glucose deprivation. In response to glucose deprivation, phosphorylated by AMPK, promoting localization to lipid droplets. Phosphorylation is followed by acetylation by KAT5, leading to dissociation of the homodimer into a monomer. Monomeric CHKA isoform 1 is converted into a tyrosine-protein kinase, which phosphorylates lipid droplet structural proteins PLIN2 and PLIN3, leading to lipolysis of lipid droplets. This is Choline kinase alpha (Chka) from Mus musculus (Mouse).